A 320-amino-acid polypeptide reads, in one-letter code: Olfactory receptor 2C3 (320 aa).

Residues Met1–Thr26 are Extracellular-facing. Residue Asn6 is glycosylated (N-linked (GlcNAc...) asparagine). The chain crosses the membrane as a helical span at residues Val27–Ser50. The Cytoplasmic portion of the chain corresponds to His51–Thr58. The helical transmembrane segment at Pro59–Pro80 threads the bilayer. The Extracellular portion of the chain corresponds to Gln81–Gln101. Residues Cys98 and Cys190 are joined by a disulfide bond. The helical transmembrane segment at Phe102–Tyr121 threads the bilayer. Over Asp122–Gln140 the chain is Cytoplasmic. A helical membrane pass occupies residues Leu141–Val159. Topologically, residues Gly160–Asn196 are extracellular. The helical transmembrane segment at Glu197 to Gly220 threads the bilayer. At His221 to Lys237 the chain is on the cytoplasmic side. A helical membrane pass occupies residues Ala238–Tyr260. At Leu261–Lys273 the chain is on the extracellular side. A helical transmembrane segment spans residues Phe274 to Leu293. The Cytoplasmic segment spans residues Arg294–Ile320.

The protein belongs to the G-protein coupled receptor 1 family.

The protein localises to the cell membrane. Odorant receptor. The chain is Olfactory receptor 2C3 (OR2C3) from Homo sapiens (Human).